The sequence spans 931 residues: GPI ethanolamine phosphate transferase 1 (931 aa).

Residue Met-1 is a topological domain, cytoplasmic. The helical transmembrane segment at 2-24 threads the bilayer; that stretch reads LLFFTLGLLIHFVFFASIFDIYF. Topologically, residues 25–442 are lumenal; it reads TSPLVHGMTP…SYYHTYDRFF (418 aa). 3 N-linked (GlcNAc...) asparagine glycosylation sites follow: Asn-128, Asn-192, and Asn-350. Residues 443 to 463 traverse the membrane as a helical segment; that stretch reads LGVNVVIGFVGWISYASLLII. Topologically, residues 464–482 are cytoplasmic; sequence KSHSNLIKGVSKEVKKPSH. A helical membrane pass occupies residues 483–503; sequence LLPCSFVAIGILVAFFLLIQA. Topologically, residues 504 to 508 are lumenal; the sequence is CPWTY. The chain crosses the membrane as a helical span at residues 509 to 529; the sequence is YVYGLLPLPIWYAVLREFQVI. Residues 530–543 lie on the Cytoplasmic side of the membrane; that stretch reads QDLVVSVLTYPLSH. A helical transmembrane segment spans residues 544–564; that stretch reads FVGYLLAFTLGIEVLVLSFFY. A topological domain (lumenal) is located at residue Arg-565. The chain crosses the membrane as a helical span at residues 566 to 586; sequence YMLTAGLTAFAAWPFLTRLWT. Residues 587-591 are Cytoplasmic-facing; it reads RAKMT. The helical transmembrane segment at 592 to 612 threads the bilayer; the sequence is SLSWTFFSLLLAVFPLMPVVG. Topologically, residues 613–618 are lumenal; sequence RKPDIS. Residues 619 to 639 traverse the membrane as a helical segment; sequence LVMGAGLLVLLLSLCVVTSLM. The Cytoplasmic portion of the chain corresponds to 640–649; it reads KRKDSFIKEE. The chain crosses the membrane as a helical span at residues 650–670; the sequence is LLVHLLQVLSTVLSMYVVYST. The Lumenal segment spans residues 671–685; sequence QSSLLRKQGLPLMNQ. The helical transmembrane segment at 686–706 threads the bilayer; that stretch reads IISWATLASSLVVPLLSSPVL. Residues 707–723 are Cytoplasmic-facing; the sequence is FQRLFSILLSLMSTYLL. Residues 724–744 traverse the membrane as a helical segment; sequence LSTGYEALFPLVLSCLMFVWI. The Lumenal segment spans residues 745–786; the sequence is NIEQETLQQSGVCCKQKLTSIQFSYNTDITQFRQLYLDDIRR. Residues 787 to 807 traverse the membrane as a helical segment; that stretch reads AFFLVFFLVTAFFGTGNIASI. Residues 808–824 are Cytoplasmic-facing; it reads NSFDLASVYCFLTVFSP. Residues 825 to 845 traverse the membrane as a helical segment; that stretch reads FMMGALMMWKILIPFVLVMCA. The Lumenal portion of the chain corresponds to 846 to 858; the sequence is FEAVQLTTQLSSK. The helical transmembrane segment at 859-879 threads the bilayer; that stretch reads SLFLIVLVISDIMALHFFFLV. Over 880 to 894 the chain is Cytoplasmic; that stretch reads KDYGSWLDIGTSISH. Residues 895–915 traverse the membrane as a helical segment; the sequence is YVIVMSMTIFLVFLNGLAQLL. The Lumenal segment spans residues 916–931; the sequence is TTKKLRLCGKPKSHFM.

Belongs to the PIGG/PIGN/PIGO family. PIGN subfamily.

It localises to the endoplasmic reticulum membrane. Its pathway is glycolipid biosynthesis; glycosylphosphatidylinositol-anchor biosynthesis. Functionally, ethanolamine phosphate transferase that catalyzes an ethanolamine phosphate (EtNP) transfer from phosphatidylethanolamine (PE) to the 2-OH position of the first alpha-1,4-linked mannose of the alpha-D-Man-(1-&gt;6)-alpha-D-Man-(1-&gt;4)-alpha-D-GlcN-(1-&gt;6)-(1-radyl,2-acyl-sn-glycero-3-phospho)-2-acyl-inositol (also termed H3) intermediate to generate an alpha-D-Man-(1-&gt;6)-2-PEtn-alpha-D-Man-(1-&gt;4)-alpha-D-GlcN-(1-&gt;6)-(1-radyl,2-acyl-sn-glycero-3-phospho)-2-acyl-inositol and participates in the eighth step of the glycosylphosphatidylinositol-anchor biosynthesis. May act as suppressor of replication stress and chromosome missegregation. This is GPI ethanolamine phosphate transferase 1 from Homo sapiens (Human).